The chain runs to 118 residues: Large ribosomal subunit protein bL20 (118 aa).

It belongs to the bacterial ribosomal protein bL20 family.

Binds directly to 23S ribosomal RNA and is necessary for the in vitro assembly process of the 50S ribosomal subunit. It is not involved in the protein synthesizing functions of that subunit. The protein is Large ribosomal subunit protein bL20 of Desulforamulus reducens (strain ATCC BAA-1160 / DSM 100696 / MI-1) (Desulfotomaculum reducens).